A 147-amino-acid chain; its full sequence is Phospholipase A2 inhibitor subunit B (147 aa).

The C-type lectin domain occupies Glu62–Phe143. Intrachain disulfides connect Cys64–Cys141 and Cys119–Cys133. An N-linked (GlcNAc...) asparagine glycan is attached at Asn103.

The protein belongs to the alpha-type phospholipase A2 inhibitor family. Homo- or heterotrimer; homotrimer of PLI-A chains, two PLI-A and one PLI-B chains, one PLI-A and two PLI-B chains, and homotrimer of PLI-B chains (with a ratio of 1:3:3:1). Expressed by the liver.

It localises to the secreted. Functionally, PLI binds directly phospholipase A2 in the presence or absence of calcium. Inhibitory activity of the PLI-B homotrimer is less specific than that of the PLI-A homotrimer. In Protobothrops flavoviridis (Habu), this protein is Phospholipase A2 inhibitor subunit B.